We begin with the raw amino-acid sequence, 215 residues long: 3-dehydroquinate dehydratase (215 aa).

3-dehydroquinate contacts are provided by residues Ser-6, 31–33, and Arg-64; that span reads ELR. The Proton donor/acceptor role is filled by His-111. The active-site Schiff-base intermediate with substrate is the Lys-138. 3-dehydroquinate-binding residues include Arg-174, Thr-193, and Gln-197.

It belongs to the type-I 3-dehydroquinase family. Homodimer.

It carries out the reaction 3-dehydroquinate = 3-dehydroshikimate + H2O. It participates in metabolic intermediate biosynthesis; chorismate biosynthesis; chorismate from D-erythrose 4-phosphate and phosphoenolpyruvate: step 3/7. Involved in the third step of the chorismate pathway, which leads to the biosynthesis of aromatic amino acids. Catalyzes the cis-dehydration of 3-dehydroquinate (DHQ) and introduces the first double bond of the aromatic ring to yield 3-dehydroshikimate. The chain is 3-dehydroquinate dehydratase from Ignicoccus hospitalis (strain KIN4/I / DSM 18386 / JCM 14125).